A 351-amino-acid polypeptide reads, in one-letter code: Uroporphyrinogen decarboxylase (351 aa).

Residues 27 to 31 (RQAGR), Asp-77, Tyr-154, Thr-209, and His-327 contribute to the substrate site.

Belongs to the uroporphyrinogen decarboxylase family. In terms of assembly, homodimer.

The protein localises to the cytoplasm. It carries out the reaction uroporphyrinogen III + 4 H(+) = coproporphyrinogen III + 4 CO2. It functions in the pathway porphyrin-containing compound metabolism; protoporphyrin-IX biosynthesis; coproporphyrinogen-III from 5-aminolevulinate: step 4/4. Functionally, catalyzes the decarboxylation of four acetate groups of uroporphyrinogen-III to yield coproporphyrinogen-III. This chain is Uroporphyrinogen decarboxylase, found in Thioalkalivibrio sulfidiphilus (strain HL-EbGR7).